Reading from the N-terminus, the 435-residue chain is Tektin-4 (435 aa).

Basic and acidic residues predominate over residues 60–69; that stretch reads DQSERQRHES. Positions 60–96 are disordered; that stretch reads DQSERQRHESQQLATETQALAQRTQQDSTRTVGERLQ. Residues 70-85 are compositionally biased toward low complexity; it reads QQLATETQALAQRTQQ. 3 coiled-coil regions span residues 102-180, 310-336, and 363-411; these read KSEL…LLKR, LHKT…DKEA, and FRLL…TNSL.

The protein belongs to the tektin family. In terms of assembly, microtubule inner protein component of sperm flagellar doublet microtubules. Post-translationally, ubiquitinated, leading to its degradation. Deubiquitinated by USP16, promoting its stability. In terms of tissue distribution, strongly expressed in spermatozoa. Also detected at low levels in pancreas. Expressed in airway epithelial cells.

Its subcellular location is the cytoplasm. The protein localises to the cytoskeleton. It localises to the cilium axoneme. It is found in the flagellum axoneme. Its function is as follows. Microtubule inner protein (MIP) part of the dynein-decorated doublet microtubules (DMTs) in cilia and flagellar axoneme. Forms filamentous polymers in the walls of ciliary and flagellar microtubules. Contributes to normal sperm motility. This Homo sapiens (Human) protein is Tektin-4.